A 470-amino-acid chain; its full sequence is D-serine/D-alanine/glycine transporter (470 aa).

12 consecutive transmembrane segments (helical) span residues L30–S50, L51–M71, F102–I122, V137–F157, F162–M182, L211–V231, I256–V276, F283–V303, F350–G370, A371–L391, P413–L433, and Q441–G461.

This sequence belongs to the amino acid-polyamine-organocation (APC) superfamily. Amino acid transporter (AAT) (TC 2.A.3.1) family.

The protein resides in the cell inner membrane. The enzyme catalyses D-alanine(in) + H(+)(in) = D-alanine(out) + H(+)(out). The catalysed reaction is D-serine(out) + H(+)(out) = D-serine(in) + H(+)(in). It carries out the reaction glycine(in) + H(+)(in) = glycine(out) + H(+)(out). In terms of biological role, permease that is involved in the transport across the cytoplasmic membrane of D-alanine, D-serine and glycine. This chain is D-serine/D-alanine/glycine transporter (cycA), found in Escherichia coli O157:H7.